We begin with the raw amino-acid sequence, 343 residues long: Heat-inducible transcription repressor HrcA (343 aa).

It belongs to the HrcA family.

Negative regulator of class I heat shock genes (grpE-dnaK-dnaJ and groELS operons). Prevents heat-shock induction of these operons. This chain is Heat-inducible transcription repressor HrcA, found in Bacillus cytotoxicus (strain DSM 22905 / CIP 110041 / 391-98 / NVH 391-98).